Consider the following 78-residue polypeptide: UPF0349 protein ABC2936 (78 aa).

The protein belongs to the UPF0349 family.

The polypeptide is UPF0349 protein ABC2936 (Shouchella clausii (strain KSM-K16) (Alkalihalobacillus clausii)).